The chain runs to 308 residues: Tetraacyldisaccharide 4'-kinase (308 aa).

63 to 70 provides a ligand contact to ATP; that stretch reads SFGGNGKT.

Belongs to the LpxK family.

The catalysed reaction is a lipid A disaccharide + ATP = a lipid IVA + ADP + H(+). It functions in the pathway glycolipid biosynthesis; lipid IV(A) biosynthesis; lipid IV(A) from (3R)-3-hydroxytetradecanoyl-[acyl-carrier-protein] and UDP-N-acetyl-alpha-D-glucosamine: step 6/6. Its function is as follows. Transfers the gamma-phosphate of ATP to the 4'-position of a tetraacyldisaccharide 1-phosphate intermediate (termed DS-1-P) to form tetraacyldisaccharide 1,4'-bis-phosphate (lipid IVA). The polypeptide is Tetraacyldisaccharide 4'-kinase (Campylobacter jejuni subsp. jejuni serotype O:2 (strain ATCC 700819 / NCTC 11168)).